Consider the following 164-residue polypeptide: Phosphopantetheine adenylyltransferase (164 aa).

Ser9 lines the substrate pocket. ATP is bound by residues Ser9–Phe10 and His17. 3 residues coordinate substrate: Lys41, Leu73, and Lys87. ATP is bound by residues Gly88–Arg90, Glu98, and Asn123–Ser129.

Belongs to the bacterial CoaD family. In terms of assembly, homohexamer. Mg(2+) serves as cofactor.

It localises to the cytoplasm. It carries out the reaction (R)-4'-phosphopantetheine + ATP + H(+) = 3'-dephospho-CoA + diphosphate. The protein operates within cofactor biosynthesis; coenzyme A biosynthesis; CoA from (R)-pantothenate: step 4/5. In terms of biological role, reversibly transfers an adenylyl group from ATP to 4'-phosphopantetheine, yielding dephospho-CoA (dPCoA) and pyrophosphate. This Clostridium kluyveri (strain ATCC 8527 / DSM 555 / NBRC 12016 / NCIMB 10680 / K1) protein is Phosphopantetheine adenylyltransferase.